A 194-amino-acid polypeptide reads, in one-letter code: Lysozyme g (194 aa).

Catalysis depends on residues Glu71 and Asp84.

It belongs to the glycosyl hydrolase 23 family. As to expression, expressed in intestine, liver, spleen, anterior kidney, posterior kidney, heart, gill, muscle and leukocytes.

It catalyses the reaction Hydrolysis of (1-&gt;4)-beta-linkages between N-acetylmuramic acid and N-acetyl-D-glucosamine residues in a peptidoglycan and between N-acetyl-D-glucosamine residues in chitodextrins.. In terms of biological role, has lytic activity against M.lysodeikticus, V.alginolyticus from Epinephelus fario, V.vulnificus from culture water, A.hydrophila from soft-shell turtle, A.hydrophila from goldfish and V.parahaemolyticus, P.fluorescens and V.fluvialis from culture water. The chain is Lysozyme g from Epinephelus coioides (Orange-spotted grouper).